Reading from the N-terminus, the 127-residue chain is Gamma-synuclein (127 aa).

2 consecutive repeat copies span residues 20 to 30 (EKTKQGVTEAA) and 31 to 41 (EKTKEGVMYVG). The segment at 20–67 (EKTKQGVTEAAEKTKEGVMYVGTKTKENVVHSVTSVAEKTKEQANAVS) is 4 X 11 AA tandem repeats of [EGSA]-K-T-K-[EQ]-[GQ]-V-X(4). The 3; approximate repeat unit spans residues 42–56 (TKTKENVVHSVTSVA). Repeat unit 4 spans residues 57–67 (EKTKEQANAVS). Ser67 and Ser72 each carry phosphoserine. The disordered stretch occupies residues 97–127 (KEDLKPSAPQQEGEAAKEKEEVAEEAQSGGD). Position 124 is a phosphoserine; by BARK1, CaMK2 and CK2 (Ser124).

It belongs to the synuclein family. May be a centrosome-associated protein. Interacts with MYOC; affects its secretion and its aggregation. Phosphorylated. Phosphorylation by GRK5 appears to occur on residues distinct from the residue phosphorylated by other kinases.

The protein localises to the cytoplasm. It is found in the perinuclear region. Its subcellular location is the cytoskeleton. The protein resides in the microtubule organizing center. It localises to the centrosome. The protein localises to the spindle. Its function is as follows. Plays a role in neurofilament network integrity. May be involved in modulating axonal architecture during development and in the adult. In vitro, increases the susceptibility of neurofilament-H to calcium-dependent proteases. May also function in modulating the keratin network in skin. Activates the MAPK and Elk-1 signal transduction pathway. This is Gamma-synuclein (SNCG) from Macaca fascicularis (Crab-eating macaque).